Here is a 355-residue protein sequence, read N- to C-terminus: tRNA uridine(34) hydroxylase (355 aa).

Residues 146-240 (KDPDALFVDM…YVRTAKKKDL (95 aa)) enclose the Rhodanese domain. The Cysteine persulfide intermediate role is filled by cysteine 200.

It belongs to the TrhO family.

It catalyses the reaction uridine(34) in tRNA + AH2 + O2 = 5-hydroxyuridine(34) in tRNA + A + H2O. Catalyzes oxygen-dependent 5-hydroxyuridine (ho5U) modification at position 34 in tRNAs. The protein is tRNA uridine(34) hydroxylase of Hamiltonella defensa subsp. Acyrthosiphon pisum (strain 5AT).